A 143-amino-acid polypeptide reads, in one-letter code: MVSGVKVSDECVYEFNKLKIKHIHKYIIYRIENYEEVIVDFLEQDNSLKSYKDIIIDIRNNLKTTECRYIIADMPIPTPEGVLRNRIYFIFWSPDLAKSKEKMLYASSKEYLVRKINGIFKSLEITCDLEDFEDELRTIILNT.

One can recognise an ADF-H domain in the interval 4-141 (GVKVSDECVY…FEDELRTIIL (138 aa)).

It belongs to the actin-binding proteins ADF family. In terms of assembly, interacts with monomeric actin, does not bind to actin polymers.

It localises to the cytoplasm. The protein localises to the cytoskeleton. Not involved in actin polymerisation, instead functions to stimulate nucleotide exchange on monomeric actin and influence turnover of the small amount of cytosolic actin microfilaments. Essential for erythrocytic schizogony. The polypeptide is Cofilin/actin-depolymerizing factor homolog 2 (Plasmodium falciparum (isolate 3D7)).